Reading from the N-terminus, the 224-residue chain is Transcription factor HEC3 (224 aa).

Disordered stretches follow at residues 22 to 42 (SSNNNNKNDDHHHQHNNDPIG) and 68 to 88 (SLTTTTLLSGDQEDDEDEEEP). Basic and acidic residues predominate over residues 28-37 (KNDDHHHQHN). Low complexity predominate over residues 68-77 (SLTTTTLLSG). A compositionally biased stretch (acidic residues) spans 78 to 88 (DQEDDEDEEEP). A bHLH domain is found at 125–174 (ISDDPQSVAARHRRERISERIRILQRLVPGGTKMDTASMLDEAIRYVKFL). The disordered stretch occupies residues 183-224 (NNTGYTPPPPQDQASQAVTTSWVSPPPPPSFGRGGRGVGELI). The span at 194–204 (DQASQAVTTSW) shows a compositional bias: polar residues. Gly residues predominate over residues 214-224 (GRGGRGVGELI).

Homodimer. Interacts with SPT. Gynoecium.

Its subcellular location is the nucleus. Functionally, required for the female reproductive tract development and fertility. In Arabidopsis thaliana (Mouse-ear cress), this protein is Transcription factor HEC3 (HEC3).